A 240-amino-acid polypeptide reads, in one-letter code: Ribonuclease T2 (240 aa).

The signal sequence occupies residues 1–19; sequence MRFIAFAVIFSAVYLCSSA. C41 and C46 form a disulfide bridge. Residue H56 is part of the active site. Cystine bridges form between C66-C110, C173-C227, and C191-C201. 2 N-linked (GlcNAc...) asparagine glycosylation sites follow: N67 and N73. Catalysis depends on residues E103 and H107.

This sequence belongs to the RNase T2 family. Ubiquitous.

It localises to the lysosome lumen. It is found in the endoplasmic reticulum lumen. The protein localises to the secreted. The enzyme catalyses a ribonucleotidyl-ribonucleotide-RNA + H2O = a 3'-end 3'-phospho-ribonucleotide-RNA + a 5'-end dephospho-ribonucleoside-RNA + H(+). In terms of biological role, has ribonuclease activity, with higher activity at acidic pH. Probably is involved in lysosomal degradation of ribosomal RNA. The protein is Ribonuclease T2 (rnaset2) of Danio rerio (Zebrafish).